Reading from the N-terminus, the 493-residue chain is Transcript termination protein A18 (493 aa).

In terms of domain architecture, Helicase ATP-binding spans 100–256 (MIELKRPLYI…NSIINIAKLS (157 aa)). 113–120 (LACGFGKT) lines the ATP pocket. The short motif at 206-209 (DESH) is the DESH box element. The 148-residue stretch at 309–456 (ILDTLVEEFK…IISLSVDKLG (148 aa)) folds into the Helicase C-terminal domain.

This sequence belongs to the helicase family. Poxviruses subfamily. In terms of assembly, interacts with G2. Might be part of a transcription complex composed at least of G2, A18, and H5.

It localises to the virion. DNA helicase which seems to act as a postreplicative transcription termination factor. Involved in ATP-dependent release of nascent RNA. Forms a stable complex with single-stranded DNA, and to a lesser extent RNA. The sequence is that of Transcript termination protein A18 from Mus musculus (Mouse).